The primary structure comprises 312 residues: Pseudouridine-5'-phosphate glycosidase (312 aa).

The Proton donor role is filled by Glu31. 2 residues coordinate substrate: Lys93 and Val113. Asp145 lines the Mn(2+) pocket. 147–149 (SAD) contacts substrate. Lys166 functions as the Nucleophile in the catalytic mechanism.

Belongs to the pseudouridine-5'-phosphate glycosidase family. In terms of assembly, homotrimer. The cofactor is Mn(2+). Fe(2+) is required as a cofactor. Requires Co(2+) as cofactor.

It catalyses the reaction D-ribose 5-phosphate + uracil = psi-UMP + H2O. Inhibited by Zn(2+) and Ni(2+). Catalyzes the reversible cleavage of pseudouridine 5'-phosphate (PsiMP) to ribose 5-phosphate and uracil. Functions biologically in the cleavage direction, as part of a pseudouridine degradation pathway. The chain is Pseudouridine-5'-phosphate glycosidase from Escherichia coli (strain K12).